The sequence spans 254 residues: MGRKFFVGGNWKCNGTAEEVKKILATLNAADVPSQDVVEVVVSPPYVFLPLVKNELRPDFHVAAQNCWVKKGGAFTGEVSAEMLVNLSIPWVILGHSERRALLGESNEFVGDKVAYALSQGLKVIACVGETLEERESGSTMDVVAAQTKAIADRVKDWTNVVVAYEPVWAIGTGKVASPAQAQEVHAELRKWLAANVSPEVAASTRIIYGGSVNGANCKELGGQPDVDGFLVGGASLKPEFIDIIKAAEVKRNA.

Positions 10 and 12 each coordinate substrate. The active-site Electrophile is the His-96. Residue Glu-166 is the Proton acceptor of the active site.

It belongs to the triosephosphate isomerase family. Homodimer.

The protein resides in the cytoplasm. It catalyses the reaction D-glyceraldehyde 3-phosphate = dihydroxyacetone phosphate. It functions in the pathway carbohydrate biosynthesis; gluconeogenesis. It participates in carbohydrate degradation; glycolysis; D-glyceraldehyde 3-phosphate from glycerone phosphate: step 1/1. The chain is Triosephosphate isomerase, cytosolic (TPIP1) from Petunia hybrida (Petunia).